The sequence spans 329 residues: Zygote arrest protein 1 (329 aa).

2 disordered regions span residues 106–132 (LRRRRQEVQTPGSPVSSGGVRFPRTQA) and 146–218 (FREE…DDLK). A compositionally biased stretch (acidic residues) spans 149 to 162 (EGEEEEDTDLEVTE). Residues 166-177 (SAEKLESAEKNV) show a composition bias toward basic and acidic residues. The segment at 231–314 (KYGFYHCKDC…RQDLCGRCKG (84 aa)) adopts a 3CxxC-type zinc-finger fold.

It belongs to the ZAR1 family. As to expression, specifically expressed in ovaries but absent in testes.

It is found in the cytoplasm. It localises to the cytoplasmic ribonucleoprotein granule. Its function is as follows. mRNA-binding protein required for maternal mRNA storage, translation and degradation during oocyte maturation. Probably promotes formation of some phase-separated membraneless compartment that stores maternal mRNAs in oocytes: acts by undergoing liquid-liquid phase separation upon binding to maternal mRNAs. Binds to the 3'-UTR of zona pellucida mRNAs, inhibiting their translation. This Danio rerio (Zebrafish) protein is Zygote arrest protein 1.